The primary structure comprises 413 residues: Arginine biosynthesis bifunctional protein ArgJ (413 aa).

Substrate is bound by residues T158, K184, T195, E285, N408, and S413. The active-site Nucleophile is the T195.

This sequence belongs to the ArgJ family. In terms of assembly, heterotetramer of two alpha and two beta chains.

The protein localises to the cytoplasm. It carries out the reaction N(2)-acetyl-L-ornithine + L-glutamate = N-acetyl-L-glutamate + L-ornithine. The enzyme catalyses L-glutamate + acetyl-CoA = N-acetyl-L-glutamate + CoA + H(+). It functions in the pathway amino-acid biosynthesis; L-arginine biosynthesis; L-ornithine and N-acetyl-L-glutamate from L-glutamate and N(2)-acetyl-L-ornithine (cyclic): step 1/1. The protein operates within amino-acid biosynthesis; L-arginine biosynthesis; N(2)-acetyl-L-ornithine from L-glutamate: step 1/4. Its function is as follows. Catalyzes two activities which are involved in the cyclic version of arginine biosynthesis: the synthesis of N-acetylglutamate from glutamate and acetyl-CoA as the acetyl donor, and of ornithine by transacetylation between N(2)-acetylornithine and glutamate. In Brucella suis biovar 1 (strain 1330), this protein is Arginine biosynthesis bifunctional protein ArgJ.